The sequence spans 626 residues: DNA polymerase 2 (626 aa).

The protein belongs to the DNA polymerase type-B family.

The catalysed reaction is DNA(n) + a 2'-deoxyribonucleoside 5'-triphosphate = DNA(n+1) + diphosphate. Functionally, this polymerase is devoid of exonuclease activity. The chain is DNA polymerase 2 (dpo2) from Saccharolobus solfataricus (strain ATCC 35092 / DSM 1617 / JCM 11322 / P2) (Sulfolobus solfataricus).